The chain runs to 303 residues: Phytochrome-associated serine/threonine-protein phosphatase 3 (303 aa).

Zn(2+) is bound by residues Asp-50, His-52, Asp-78, and Asn-110. The active-site Proton donor is the His-111. 2 residues coordinate Zn(2+): His-160 and His-234.

This sequence belongs to the PPP phosphatase family. PP-6 (PP-V) subfamily. In terms of assembly, interacts with PHYA and PHYB, mostly when they are phosphorylated and in Pfr forms. Interacts with TAP46. Interacts with NRP. Interacts with PIN1 and PIN2. Interacts with ABI5. Interacts with PIF3 and PIF4. Protein phosphatase 6 (PP6) holoenzyme is a heterotrimeric complex formed by the catalytic subunit FYPP, a SAPS domain-containing subunit (SAL) and a protein phosphatase 2A regulatory subunit A (PP2AA). Zn(2+) serves as cofactor. As to expression, mostly expressed in flowers. Also detected to a lower extent in stems and leaves. Expressed in roots.

It localises to the cytoplasm. It carries out the reaction O-phospho-L-seryl-[protein] + H2O = L-seryl-[protein] + phosphate. It catalyses the reaction O-phospho-L-threonyl-[protein] + H2O = L-threonyl-[protein] + phosphate. Its function is as follows. Catalytic subunit of protein phosphatase 6 (PP6). Dephosphorylates phosphorylated phytochromes, with a preference toward Pfr forms. Plays a major role in the photoperiodic control of flowering time in long days by modulating phytochrome signals in flowering time control. Involved in the regulation of polar auxin transport in roots. Dephosphorylates directly the auxin efflux carriers PIN1 and PIN2, thus promoting their proper polar localization in root cell plasma membrane. Acts antagonistically with the protein kinase PID to regulate the reversible phosphorylation of PIN and polar targeting, subsequently impacting polar auxin transport and plant development. Involved in the regulation of abscisic acid (ABA) signaling during seed germination and postgermination seedling growth. Functions as a negative regulator of ABA signaling through direct dephosphorylation and destabilization of ABI5 protein. Acts antagonistically with the protein kinase SRK2E/SNRK2.6 to regulate ABI5 phosphorylation and ABA responses. Involved in the regulation of phosphorylation status in hypocotyl phototropism. Involved in the negative regulation of photomorphogenesis by controlling the stability and transcriptional activity of PIF3 and PIF4 proteins in the dark, via the regulation of their phosphorylation status. The chain is Phytochrome-associated serine/threonine-protein phosphatase 3 from Arabidopsis thaliana (Mouse-ear cress).